Consider the following 472-residue polypeptide: Nuclear receptor subfamily 0 group B member 1 (472 aa).

Tandem repeats lie at residues 1–67, 68–135, and 136–202. The tract at residues 1–255 is 4 X 67 AA tandem repeats; the sequence is MAGEDHPWHG…RPIALKDPQV (255 aa). 3 short sequence motifs (LXXLL motif) span residues 13 to 17, 80 to 84, and 148 to 152; these read LYNLL, LYSML, and LYSLL. Residues 190–471 form the NR LBD domain; it reads QSTQAMAFLY…DMMLEMLCAK (282 aa). One copy of the 4; truncated repeat lies at 203–255; it reads VCCEEQPQQSSVASDTPVRADQTPAAPQEQPRAPWWDTSSGVQRPIALKDPQV. 2 disordered regions span residues 214–237 and 326–345; these read VASD…RAPW and RRQE…EQPQ. Positions 463 to 468 match the AF-2 motif motif; it reads MMLEML.

The protein belongs to the nuclear hormone receptor family. NR0 subfamily. Homodimer. Interacts with NR5A1, NR5A2, NR0B2 and with COPS2. Interacts with ESRRB; represses ESRRB activity at the GATA6 promoter.

The protein resides in the nucleus. The protein localises to the cytoplasm. In terms of biological role, nuclear receptor that lacks a DNA-binding domain and acts as a corepressor that inhibits the transcriptional activity of other nuclear receptors through heterodimeric interactions. Component of a cascade required for the development of the hypothalamic-pituitary-adrenal-gonadal axis. May also have a role in the development of the embryo and in the maintenance of embryonic stem cell pluripotency. The polypeptide is Nuclear receptor subfamily 0 group B member 1 (Nr0b1) (Rattus norvegicus (Rat)).